The sequence spans 269 residues: Type 4 prepilin-like proteins leader peptide-processing enzyme (269 aa).

7 consecutive transmembrane segments (helical) span residues 13–33 (MPVL…VVIW), 102–122 (YPLV…VWPE), 124–144 (GWAL…VIDL), 147–167 (QWLP…AAWA), 178–198 (VTGV…AGIV), 210–230 (LLFA…VALI), and 249–269 (LPFG…QALF).

The protein belongs to the peptidase A24 family.

The protein localises to the cell inner membrane. The enzyme catalyses Typically cleaves a -Gly-|-Phe- bond to release an N-terminal, basic peptide of 5-8 residues from type IV prepilin, and then N-methylates the new N-terminal amino group, the methyl donor being S-adenosyl-L-methionine.. In terms of biological role, cleaves type-4 fimbrial leader sequence and methylates the N-terminal (generally Phe) residue. In Escherichia coli O78:H11 (strain H10407 / ETEC), this protein is Type 4 prepilin-like proteins leader peptide-processing enzyme.